The following is a 274-amino-acid chain: SPbeta prophage-derived UPF0714 protein YoqZ (274 aa).

This sequence belongs to the UPF0714 family.

The polypeptide is SPbeta prophage-derived UPF0714 protein YoqZ (yoqZ) (Bacillus subtilis (strain 168)).